A 318-amino-acid polypeptide reads, in one-letter code: ATP synthase gamma chain (318 aa).

This sequence belongs to the ATPase gamma chain family. F-type ATPases have 2 components, CF(1) - the catalytic core - and CF(0) - the membrane proton channel. CF(1) has five subunits: alpha(3), beta(3), gamma(1), delta(1), epsilon(1). CF(0) has three main subunits: a, b and c.

Its subcellular location is the cell membrane. Functionally, produces ATP from ADP in the presence of a proton gradient across the membrane. The gamma chain is believed to be important in regulating ATPase activity and the flow of protons through the CF(0) complex. In Lactobacillus johnsonii (strain CNCM I-12250 / La1 / NCC 533), this protein is ATP synthase gamma chain.